The primary structure comprises 487 residues: Glycogen synthase (487 aa).

K20 lines the ADP-alpha-D-glucose pocket.

Belongs to the glycosyltransferase 1 family. Bacterial/plant glycogen synthase subfamily.

It carries out the reaction [(1-&gt;4)-alpha-D-glucosyl](n) + ADP-alpha-D-glucose = [(1-&gt;4)-alpha-D-glucosyl](n+1) + ADP + H(+). It participates in glycan biosynthesis; glycogen biosynthesis. In terms of biological role, synthesizes alpha-1,4-glucan chains using ADP-glucose. This is Glycogen synthase from Aliivibrio fischeri (strain ATCC 700601 / ES114) (Vibrio fischeri).